The primary structure comprises 328 residues: Tetraacyldisaccharide 4'-kinase (328 aa).

55–62 (TAGGNGKT) lines the ATP pocket.

It belongs to the LpxK family.

It carries out the reaction a lipid A disaccharide + ATP = a lipid IVA + ADP + H(+). It participates in glycolipid biosynthesis; lipid IV(A) biosynthesis; lipid IV(A) from (3R)-3-hydroxytetradecanoyl-[acyl-carrier-protein] and UDP-N-acetyl-alpha-D-glucosamine: step 6/6. Functionally, transfers the gamma-phosphate of ATP to the 4'-position of a tetraacyldisaccharide 1-phosphate intermediate (termed DS-1-P) to form tetraacyldisaccharide 1,4'-bis-phosphate (lipid IVA). In Escherichia coli O139:H28 (strain E24377A / ETEC), this protein is Tetraacyldisaccharide 4'-kinase.